Reading from the N-terminus, the 922-residue chain is Protein translocase subunit SecA (922 aa).

ATP is bound by residues Q87, 105–109 (GEGKT), and D519. The segment at 850–891 (HASRQMRSIQGNAQHNSMGSFSGSGHGMGPTALSARSRPENA) is disordered. The segment covering 854–865 (QMRSIQGNAQHN) has biased composition (polar residues). The Zn(2+) site is built by C906, C908, C917, and C918.

Belongs to the SecA family. Monomer and homodimer. Part of the essential Sec protein translocation apparatus which comprises SecA, SecYEG and auxiliary proteins SecDF. Other proteins may also be involved. Requires Zn(2+) as cofactor.

It is found in the cell inner membrane. Its subcellular location is the cytoplasm. It catalyses the reaction ATP + H2O + cellular proteinSide 1 = ADP + phosphate + cellular proteinSide 2.. Functionally, part of the Sec protein translocase complex. Interacts with the SecYEG preprotein conducting channel. Has a central role in coupling the hydrolysis of ATP to the transfer of proteins into and across the cell membrane, serving as an ATP-driven molecular motor driving the stepwise translocation of polypeptide chains across the membrane. In Treponema denticola (strain ATCC 35405 / DSM 14222 / CIP 103919 / JCM 8153 / KCTC 15104), this protein is Protein translocase subunit SecA.